Here is a 1175-residue protein sequence, read N- to C-terminus: Tyrosine-protein phosphatase non-receptor type 21 (1175 aa).

Residues 23–308 (LVARIQLLNN…ARHKFYRLNQ (286 aa)) form the FERM domain. Residues 395-421 (YSAHSTNSLNTPQPYLQPSPMSSNPSI) show a composition bias toward polar residues. Residues 395–445 (YSAHSTNSLNTPQPYLQPSPMSSNPSIPGSDVMRPDYIPSHRHSALIPPSY) are disordered. A phosphoserine mark is found at serine 577, serine 589, serine 590, serine 637, serine 673, serine 710, serine 711, serine 798, serine 800, and serine 805. The interval 663 to 702 (DVAPRTFSAGSQSSVFSDKVKQEGTEEQGSGGYSHKKSLS) is disordered. One can recognise a Tyrosine-protein phosphatase domain in the interval 897–1168 (VFTEYERILK…TFVYRVLIQF (272 aa)). Residues glutamate 1068, 1109-1115 (CSAGVGR), and glutamine 1153 contribute to the substrate site. The Phosphocysteine intermediate role is filled by cysteine 1109.

The protein belongs to the protein-tyrosine phosphatase family. Non-receptor class subfamily. As to expression, particularly abundantly in adrenal glands.

The protein resides in the cytoplasm. Its subcellular location is the cytoskeleton. The enzyme catalyses O-phospho-L-tyrosyl-[protein] + H2O = L-tyrosyl-[protein] + phosphate. This is Tyrosine-protein phosphatase non-receptor type 21 (Ptpn21) from Rattus norvegicus (Rat).